Here is a 240-residue protein sequence, read N- to C-terminus: MTDPHTARTIVGIVGNVISFGLFCAPIPTMVKIWKMKSVSEFKPDPYVATVLNCMMWTFYGLPFVQPDSLLVITINGTGLFMELVYVTIFFVFATSPVRRKITIAMVIEVIFMAVVIFCTMYFLHTTKQRSMLIGILCIVFNVIMYAAPLTVMKLVIKTKSVKYMPFFLSLANFMNGVVWVIYACLKFDPYILIPNGLGSLSGIIQLIIYITYYKTTNWNDDDEDKEKRYSNAGIELGQA.

Topologically, residues 1 to 9 (MTDPHTART) are extracellular. The chain crosses the membrane as a helical span at residues 10–30 (IVGIVGNVISFGLFCAPIPTM). Residues 10–95 (IVGIVGNVIS…YVTIFFVFAT (86 aa)) enclose the MtN3/slv 1 domain. Residues 31–45 (VKIWKMKSVSEFKPD) are Cytoplasmic-facing. A helical transmembrane segment spans residues 46–66 (PYVATVLNCMMWTFYGLPFVQ). The Extracellular portion of the chain corresponds to 67-72 (PDSLLV). Residues 73 to 93 (ITINGTGLFMELVYVTIFFVF) form a helical membrane-spanning segment. Over 94–103 (ATSPVRRKIT) the chain is Cytoplasmic. Residues 104 to 124 (IAMVIEVIFMAVVIFCTMYFL) traverse the membrane as a helical segment. The Extracellular segment spans residues 125 to 131 (HTTKQRS). Residues 132 to 152 (MLIGILCIVFNVIMYAAPLTV) form a helical membrane-spanning segment. The 85-residue stretch at 133–217 (LIGILCIVFN…IIYITYYKTT (85 aa)) folds into the MtN3/slv 2 domain. Residues 153 to 165 (MKLVIKTKSVKYM) lie on the Cytoplasmic side of the membrane. Residues 166-186 (PFFLSLANFMNGVVWVIYACL) traverse the membrane as a helical segment. At 187–190 (KFDP) the chain is on the extracellular side. Residues 191 to 211 (YILIPNGLGSLSGIIQLIIYI) traverse the membrane as a helical segment. Residues 212 to 240 (TYYKTTNWNDDDEDKEKRYSNAGIELGQA) lie on the Cytoplasmic side of the membrane.

The protein belongs to the SWEET sugar transporter family. In terms of assembly, forms homooligomers and heterooligomers with SWEET6, SWEET8, SWEET9, SWEET11 and SWEET12.

The protein localises to the cell membrane. Its function is as follows. Mediates both low-affinity uptake and efflux of sugar across the plasma membrane. May play roles in nurturing the male gametophyte. This chain is Bidirectional sugar transporter SWEET5, found in Arabidopsis thaliana (Mouse-ear cress).